The chain runs to 1035 residues: Potassium-transporting ATPase alpha chain 1 (1035 aa).

The tract at residues M1–E41 is disordered. The Cytoplasmic portion of the chain corresponds to M1–P98. Phosphotyrosine is present on residues Y7 and Y10. The span at M26–K40 shows a compositional bias: basic residues. S27 carries the post-translational modification Phosphoserine. The chain crosses the membrane as a helical span at residues E99–A119. The Lumenal portion of the chain corresponds to A120–Y142. Residues L143 to F163 form a helical membrane-spanning segment. Topologically, residues K164–I299 are cytoplasmic. A helical transmembrane segment spans residues E300 to I319. The Lumenal portion of the chain corresponds to V320–A331. The chain crosses the membrane as a helical span at residues M332 to A349. The K(+) site is built by V340, A341, V343, and E345. The Cytoplasmic portion of the chain corresponds to T350–L783. Catalysis depends on D387, which acts as the 4-aspartylphosphate intermediate. Mg(2+) is bound by residues D387 and T389. Phosphoserine occurs at positions 463 and 601. Residues D728 and D732 each coordinate Mg(2+). The helical transmembrane segment at K784–I803 threads the bilayer. Position 797 (E797) interacts with K(+). The Lumenal segment spans residues Y804 to L813. A helical transmembrane segment spans residues G814–A834. E822 is a binding site for K(+). Topologically, residues Y835–R854 are cytoplasmic. S840 carries the post-translational modification Phosphoserine. Residues L855 to F877 form a helical membrane-spanning segment. Topologically, residues T878–C929 are lumenal. Residues Y930 to K949 traverse the membrane as a helical segment. The Cytoplasmic segment spans residues T950 to N963. Position 954 is a phosphoserine; by PKA (S954). Residues K964 to Y982 form a helical membrane-spanning segment. The Lumenal segment spans residues C983 to F997. Residues Q998 to K1018 traverse the membrane as a helical segment. Residues L1019 to Y1035 lie on the Cytoplasmic side of the membrane.

It belongs to the cation transport ATPase (P-type) (TC 3.A.3) family. Type IIC subfamily. As to quaternary structure, the gastric H(+)/K(+) ATPase pump is composed of the catalytic alpha subunit ATP4A and the regulatory beta subunit ATP4B. Interacts (via the P-domain) with ATP4B (via N-terminus); this interaction stabilizes the lumenal-open E2 conformation state and prevents the reverse reaction of the transport cycle. Expressed in gastric parietal cells (at protein level).

It is found in the apical cell membrane. It carries out the reaction K(+)(out) + ATP + H2O + H(+)(in) = K(+)(in) + ADP + phosphate + 2 H(+)(out). In terms of biological role, the catalytic subunit of the gastric H(+)/K(+) ATPase pump which transports H(+) ions in exchange for K(+) ions across the apical membrane of parietal cells. Uses ATP as an energy source to pump H(+) ions to the gastric lumen while transporting K(+) ion from the lumen into the cell. Remarkably generates a million-fold proton gradient across the gastric parietal cell membrane, acidifying the gastric juice down to pH 1. Within a transport cycle, the transfer of a H(+) ion across the membrane is coupled to ATP hydrolysis and is associated with a transient phosphorylation that shifts the pump conformation from inward-facing (E1) to outward-facing state (E2). The release of the H(+) ion in the stomach lumen is followed by binding of K(+) ion converting the pump conformation back to the E1 state. The sequence is that of Potassium-transporting ATPase alpha chain 1 from Homo sapiens (Human).